Consider the following 273-residue polypeptide: Dermonecrotic toxin LruSicTox-alphaIC1c (273 aa).

Residue H5 is part of the active site. E25 and D27 together coordinate Mg(2+). The active-site Nucleophile is H41. 2 disulfides stabilise this stretch: C45-C51 and C47-C190. D85 serves as a coordination point for Mg(2+).

This sequence belongs to the arthropod phospholipase D family. Class II subfamily. Mg(2+) serves as cofactor. Expressed by the venom gland.

The protein resides in the secreted. The catalysed reaction is an N-(acyl)-sphingosylphosphocholine = an N-(acyl)-sphingosyl-1,3-cyclic phosphate + choline. It catalyses the reaction an N-(acyl)-sphingosylphosphoethanolamine = an N-(acyl)-sphingosyl-1,3-cyclic phosphate + ethanolamine. It carries out the reaction a 1-acyl-sn-glycero-3-phosphocholine = a 1-acyl-sn-glycero-2,3-cyclic phosphate + choline. The enzyme catalyses a 1-acyl-sn-glycero-3-phosphoethanolamine = a 1-acyl-sn-glycero-2,3-cyclic phosphate + ethanolamine. Its function is as follows. Dermonecrotic toxins cleave the phosphodiester linkage between the phosphate and headgroup of certain phospholipids (sphingolipid and lysolipid substrates), forming an alcohol (often choline) and a cyclic phosphate. This toxin acts on sphingomyelin (SM). It may also act on ceramide phosphoethanolamine (CPE), lysophosphatidylcholine (LPC) and lysophosphatidylethanolamine (LPE), but not on lysophosphatidylserine (LPS), and lysophosphatidylglycerol (LPG). It acts by transphosphatidylation, releasing exclusively cyclic phosphate products as second products. Induces dermonecrosis, hemolysis, increased vascular permeability, edema, inflammatory response, and platelet aggregation. The polypeptide is Dermonecrotic toxin LruSicTox-alphaIC1c (Loxosceles rufescens (Mediterranean recluse spider)).